We begin with the raw amino-acid sequence, 117 residues long: Large ribosomal subunit protein bL20 (117 aa).

This sequence belongs to the bacterial ribosomal protein bL20 family.

Its function is as follows. Binds directly to 23S ribosomal RNA and is necessary for the in vitro assembly process of the 50S ribosomal subunit. It is not involved in the protein synthesizing functions of that subunit. The protein is Large ribosomal subunit protein bL20 of Campylobacter lari (strain RM2100 / D67 / ATCC BAA-1060).